Here is a 252-residue protein sequence, read N- to C-terminus: Chitooligosaccharide deacetylase (252 aa).

2 residues coordinate Mg(2+): His-61 and His-125.

Belongs to the YdjC deacetylase family. ChbG subfamily. As to quaternary structure, homodimer. Requires Mg(2+) as cofactor.

It localises to the cytoplasm. It catalyses the reaction N,N'-diacetylchitobiose + H2O = N-acetyl-beta-D-glucosaminyl-(1-&gt;4)-D-glucosamine + acetate. It carries out the reaction diacetylchitobiose-6'-phosphate + H2O = N'-monoacetylchitobiose-6'-phosphate + acetate. Its pathway is glycan degradation; chitin degradation. Functionally, involved in the degradation of chitin. ChbG is essential for growth on the acetylated chitooligosaccharides chitobiose and chitotriose but is dispensable for growth on cellobiose and chitosan dimer, the deacetylated form of chitobiose. Deacetylation of chitobiose-6-P and chitotriose-6-P is necessary for both the activation of the chb promoter by the regulatory protein ChbR and the hydrolysis of phosphorylated beta-glucosides by the phospho-beta-glucosidase ChbF. Catalyzes the removal of only one acetyl group from chitobiose-6-P to yield monoacetylchitobiose-6-P, the inducer of ChbR and the substrate of ChbF. The chain is Chitooligosaccharide deacetylase from Escherichia coli O139:H28 (strain E24377A / ETEC).